The sequence spans 486 residues: Matrilin-3 (486 aa).

An N-terminal signal peptide occupies residues 1 to 28 (MPRPAPARRLPGLLLLLWPLLLLPSAAP). Residues 32–75 (ARPGFRRLETRGPGGSPGRRPSPAAPDGAPASGTSEPGRARGAG) are disordered. The span at 49-64 (GRRPSPAAPDGAPASG) shows a compositional bias: low complexity. Residues 83–258 (DLVFIIDSSR…GVIEKLSSRF (176 aa)) form the VWFA domain. Arg198 carries the omega-N-methylarginine modification. 4 EGF-like domains span residues 264 to 305 (ALDP…KTCS), 306 to 347 (ALDR…KTCS), 348 to 389 (AQDK…KTCS), and 390 to 431 (VRDK…KTCS). 12 disulfides stabilise this stretch: Cys268–Cys279, Cys275–Cys289, Cys291–Cys304, Cys310–Cys321, Cys317–Cys331, Cys333–Cys346, Cys352–Cys363, Cys359–Cys373, Cys375–Cys388, Cys394–Cys405, Cys401–Cys415, and Cys417–Cys430. Phosphoserine; by FAM20C is present on Ser441. Thr442 carries the post-translational modification Phosphothreonine; by FAM20C. Residues 456 to 480 (DKVSSYLQRLNTKLDDILEKLKINE) adopt a coiled-coil conformation.

In terms of assembly, can form homooligomers (monomers, dimers, trimers and tetramers) and heterooligomers with matrilin-1. Interacts with COMP. Component of a complex containing at least CRELD2, MANF, MATN3 and PDIA4. In terms of tissue distribution, expressed only in cartilaginous tissues, such as vertebrae, ribs and shoulders.

The protein localises to the secreted. Functionally, major component of the extracellular matrix of cartilage and may play a role in the formation of extracellular filamentous networks. This chain is Matrilin-3 (MATN3), found in Homo sapiens (Human).